Reading from the N-terminus, the 356-residue chain is Histidinol-phosphate aminotransferase 1 (356 aa).

At Lys213 the chain carries N6-(pyridoxal phosphate)lysine.

Belongs to the class-II pyridoxal-phosphate-dependent aminotransferase family. Histidinol-phosphate aminotransferase subfamily. In terms of assembly, homodimer. The cofactor is pyridoxal 5'-phosphate.

The catalysed reaction is L-histidinol phosphate + 2-oxoglutarate = 3-(imidazol-4-yl)-2-oxopropyl phosphate + L-glutamate. It functions in the pathway amino-acid biosynthesis; L-histidine biosynthesis; L-histidine from 5-phospho-alpha-D-ribose 1-diphosphate: step 7/9. The sequence is that of Histidinol-phosphate aminotransferase 1 from Burkholderia pseudomallei (strain K96243).